Consider the following 307-residue polypeptide: Beta-lactamase (307 aa).

The tat-type signal signal peptide spans Met1 to Ala34. Ser84 acts as the Acyl-ester intermediate in catalysis. Position 142 (Ser142) interacts with substrate. Catalysis depends on Glu182, which acts as the Proton acceptor. Thr251 to Thr253 contributes to the substrate binding site.

It belongs to the class-A beta-lactamase family. In terms of assembly, monomer. In terms of processing, exported by the Tat system. The position of the signal peptide cleavage has not been experimentally proven.

It localises to the periplasm. It is found in the secreted. The enzyme catalyses a beta-lactam + H2O = a substituted beta-amino acid. Is inhibited by clavulanate. Extended spectrum beta-lactamase (ESBL) that inactivates beta-lactam antibiotics by hydrolyzing the amide group of the beta-lactam ring. Displays high levels of penicillinase and cephalosporinase activity as well as measurable activity with carbapenems, including imipenem and meropenem. Plays a primary role in the intrinsic resistance of mycobacteria to beta-lactam antibiotics. The sequence is that of Beta-lactamase (blaC) from Mycobacterium bovis (strain ATCC BAA-935 / AF2122/97).